The chain runs to 398 residues: Phosphoglycerate kinase (398 aa).

Substrate contacts are provided by residues 23 to 25 (DFN), arginine 38, 61 to 64 (HMGK), arginine 122, and arginine 155. ATP-binding positions include lysine 206, glycine 297, glutamate 328, and 354–357 (GGDS).

This sequence belongs to the phosphoglycerate kinase family. As to quaternary structure, monomer.

Its subcellular location is the cytoplasm. The enzyme catalyses (2R)-3-phosphoglycerate + ATP = (2R)-3-phospho-glyceroyl phosphate + ADP. It participates in carbohydrate degradation; glycolysis; pyruvate from D-glyceraldehyde 3-phosphate: step 2/5. This Clostridium botulinum (strain 657 / Type Ba4) protein is Phosphoglycerate kinase.